The sequence spans 179 residues: ATP synthase subunit delta (179 aa).

The protein belongs to the ATPase delta chain family. As to quaternary structure, F-type ATPases have 2 components, F(1) - the catalytic core - and F(0) - the membrane proton channel. F(1) has five subunits: alpha(3), beta(3), gamma(1), delta(1), epsilon(1). F(0) has three main subunits: a(1), b(2) and c(10-14). The alpha and beta chains form an alternating ring which encloses part of the gamma chain. F(1) is attached to F(0) by a central stalk formed by the gamma and epsilon chains, while a peripheral stalk is formed by the delta and b chains.

Its subcellular location is the cell inner membrane. Its function is as follows. F(1)F(0) ATP synthase produces ATP from ADP in the presence of a proton or sodium gradient. F-type ATPases consist of two structural domains, F(1) containing the extramembraneous catalytic core and F(0) containing the membrane proton channel, linked together by a central stalk and a peripheral stalk. During catalysis, ATP synthesis in the catalytic domain of F(1) is coupled via a rotary mechanism of the central stalk subunits to proton translocation. In terms of biological role, this protein is part of the stalk that links CF(0) to CF(1). It either transmits conformational changes from CF(0) to CF(1) or is implicated in proton conduction. The sequence is that of ATP synthase subunit delta from Acidithiobacillus ferridurans.